A 307-amino-acid chain; its full sequence is Small ribosomal subunit protein bS1 (307 aa).

3 S1 motif domains span residues 32–101, 119–183, and 197–265; these read GDTV…LSIR, DATV…LSHR, and GEVV…LSTK.

It belongs to the bacterial ribosomal protein bS1 family.

Functionally, binds mRNA. This is Small ribosomal subunit protein bS1 (rpsA) from Synechococcus sp. (strain ATCC 27144 / PCC 6301 / SAUG 1402/1) (Anacystis nidulans).